A 544-amino-acid polypeptide reads, in one-letter code: Glucans biosynthesis protein G (544 aa).

Residues M1 to A34 form the signal peptide.

This sequence belongs to the OpgD/OpgG family.

It localises to the periplasm. It functions in the pathway glycan metabolism; osmoregulated periplasmic glucan (OPG) biosynthesis. Functionally, involved in the biosynthesis of osmoregulated periplasmic glucans (OPGs). The sequence is that of Glucans biosynthesis protein G from Shewanella putrefaciens (strain CN-32 / ATCC BAA-453).